Here is a 691-residue protein sequence, read N- to C-terminus: Guanylate cyclase soluble subunit alpha-1 (691 aa).

At S267 the chain carries Phosphoserine. One can recognise a Guanylate cyclase domain in the interval V480–F607.

Belongs to the adenylyl cyclase class-4/guanylyl cyclase family. As to quaternary structure, the active enzyme is formed by a heterodimer of an alpha and a beta subunit. Heterodimer with GUCY1B1. It depends on Mg(2+) as a cofactor. The cofactor is Mn(2+).

It is found in the cytoplasm. It catalyses the reaction GTP = 3',5'-cyclic GMP + diphosphate. Its activity is regulated as follows. Activated by nitric oxide in the presence of magnesium or manganese ions. This chain is Guanylate cyclase soluble subunit alpha-1 (Gucy1a1), found in Mus musculus (Mouse).